Reading from the N-terminus, the 218-residue chain is Octanoyltransferase (218 aa).

In terms of domain architecture, BPL/LPL catalytic spans 31–207; that stretch reads AQTPDELWLL…QLAAQLGYAE (177 aa). Residues 70–77, 137–139, and 150–152 each bind substrate; these read RGGQVTYH, SLG, and GLA. Cys-168 (acyl-thioester intermediate) is an active-site residue.

The protein belongs to the LipB family.

It localises to the cytoplasm. The catalysed reaction is octanoyl-[ACP] + L-lysyl-[protein] = N(6)-octanoyl-L-lysyl-[protein] + holo-[ACP] + H(+). Its pathway is protein modification; protein lipoylation via endogenous pathway; protein N(6)-(lipoyl)lysine from octanoyl-[acyl-carrier-protein]: step 1/2. In terms of biological role, catalyzes the transfer of endogenously produced octanoic acid from octanoyl-acyl-carrier-protein onto the lipoyl domains of lipoate-dependent enzymes. Lipoyl-ACP can also act as a substrate although octanoyl-ACP is likely to be the physiological substrate. The chain is Octanoyltransferase from Azotobacter vinelandii (strain DJ / ATCC BAA-1303).